Consider the following 112-residue polypeptide: uncharacterized protein (112 aa).

Positions 91–112 (ENQRKKGTRKRRSSEVDSKEKS) are disordered. Positions 103-112 (SSEVDSKEKS) are enriched in basic and acidic residues.

This is an uncharacterized protein from Caenorhabditis elegans.